Consider the following 323-residue polypeptide: Acetyl-coenzyme A carboxylase carboxyl transferase subunit alpha (323 aa).

Positions 40 to 293 (LAEKSLQLTK…RKALAESLKT (254 aa)) constitute a CoA carboxyltransferase C-terminal domain.

Belongs to the AccA family. Acetyl-CoA carboxylase is a heterohexamer composed of biotin carboxyl carrier protein (AccB), biotin carboxylase (AccC) and two subunits each of ACCase subunit alpha (AccA) and ACCase subunit beta (AccD).

It localises to the cytoplasm. The catalysed reaction is N(6)-carboxybiotinyl-L-lysyl-[protein] + acetyl-CoA = N(6)-biotinyl-L-lysyl-[protein] + malonyl-CoA. It participates in lipid metabolism; malonyl-CoA biosynthesis; malonyl-CoA from acetyl-CoA: step 1/1. Its function is as follows. Component of the acetyl coenzyme A carboxylase (ACC) complex. First, biotin carboxylase catalyzes the carboxylation of biotin on its carrier protein (BCCP) and then the CO(2) group is transferred by the carboxyltransferase to acetyl-CoA to form malonyl-CoA. The polypeptide is Acetyl-coenzyme A carboxylase carboxyl transferase subunit alpha (Polynucleobacter necessarius subsp. necessarius (strain STIR1)).